Reading from the N-terminus, the 572-residue chain is Galectin-3-binding protein B (572 aa).

Residues 1 to 14 (MLLLWPLLFLQVSA) form the signal peptide. Residues 32 to 131 (VRLVGVIPSS…HKEDAGVICA (100 aa)) form the SRCR domain. Cystine bridges form between Cys56/Cys120, Cys69/Cys130, and Cys100/Cys110. Residues Asn135, Asn195, and Asn202 are each glycosylated (N-linked (GlcNAc...) asparagine). In terms of domain architecture, BTB spans 164–231 (CDFTIAVRDL…LYTRQIDVST (68 aa)). The region spanning 270 to 372 (QVSMYEYGVR…IPVDKLYDIQ (103 aa)) is the BACK domain. 2 N-linked (GlcNAc...) asparagine glycosylation sites follow: Asn430 and Asn548.

The protein resides in the secreted. It localises to the extracellular space. It is found in the extracellular matrix. Its function is as follows. Promotes integrin-mediated cell adhesion. The chain is Galectin-3-binding protein B (lgals3bpb) from Danio rerio (Zebrafish).